A 124-amino-acid chain; its full sequence is Small ribosomal subunit protein uS12 (124 aa).

Residues 1–28 form a disordered region; that stretch reads MPTISQLVGSERKRLTKKTKSPALKSCP. 3-methylthioaspartic acid is present on D89. The tract at residues 104-124 is disordered; the sequence is TAGVKDRRQSRSKYGAKAPKD.

Belongs to the universal ribosomal protein uS12 family. In terms of assembly, part of the 30S ribosomal subunit. Contacts proteins S8 and S17. May interact with IF1 in the 30S initiation complex.

Functionally, with S4 and S5 plays an important role in translational accuracy. Interacts with and stabilizes bases of the 16S rRNA that are involved in tRNA selection in the A site and with the mRNA backbone. Located at the interface of the 30S and 50S subunits, it traverses the body of the 30S subunit contacting proteins on the other side and probably holding the rRNA structure together. The combined cluster of proteins S8, S12 and S17 appears to hold together the shoulder and platform of the 30S subunit. In Prochlorococcus marinus (strain MIT 9301), this protein is Small ribosomal subunit protein uS12.